A 340-amino-acid polypeptide reads, in one-letter code: Probable D,D-dipeptide transport system permease protein DdpB (340 aa).

At 1 to 11 (MTFWSILRQRC) the chain is on the periplasmic side. A helical transmembrane segment spans residues 12 to 32 (WGLVLVVAGVCVITFIISHLI). Residues 33–104 (PGDPARLLAG…IFFPATLELA (72 aa)) are Cytoplasmic-facing. Residues 97–327 (FPATLELAFG…LVNLVVDLLY (231 aa)) enclose the ABC transmembrane type-1 domain. Residues 105 to 125 (FGALLLALLIGIPLGILSAVW) traverse the membrane as a helical segment. Topologically, residues 126–135 (RNRWLDHLVR) are periplasmic. A helical membrane pass occupies residues 136 to 156 (IMAITGISTPAFWLGLGVIVL). Residues 157–199 (FYGHLQILPGGGRLDDWLDPPTHVTGFYLLDALLEGNGEVFFN) lie on the Cytoplasmic side of the membrane. The helical transmembrane segment at 200 to 220 (ALQHLILPALTLAFVHLGIVA) threads the bilayer. Residues 221 to 246 (RQIRSAMLEQLSEDYIRTARASGLPG) lie on the Periplasmic side of the membrane. Residues 247-269 (WYIVLCYALPNALIPSITVLGLA) traverse the membrane as a helical segment. Over 270 to 279 (LGDLLYGAVL) the chain is Cytoplasmic. A helical transmembrane segment spans residues 280 to 300 (TETVFAWPGMGAWVVTSIQAL). D301 is a topological domain (periplasmic). The chain crosses the membrane as a helical span at residues 302 to 322 (FPAVMGFAVVVSFAYVLVNLV). Residues 323–340 (VDLLYLWIDPRIGRGGGE) are Cytoplasmic-facing.

This sequence belongs to the binding-protein-dependent transport system permease family. OppBC subfamily. As to quaternary structure, the complex is composed of two ATP-binding proteins (DdpD and DdpF), two transmembrane proteins (DdpB and DdpC) and a solute-binding protein (DdpA).

Its subcellular location is the cell inner membrane. Functionally, part of the ABC transporter complex DdpABCDF, which is probably involved in D,D-dipeptide transport. Probably responsible for the translocation of the substrate across the membrane. This is Probable D,D-dipeptide transport system permease protein DdpB (ddpB) from Escherichia coli (strain K12).